Here is a 240-residue protein sequence, read N- to C-terminus: tRNA (guanine-N(1)-)-methyltransferase (240 aa).

S-adenosyl-L-methionine is bound by residues G110 and L129 to L134.

This sequence belongs to the RNA methyltransferase TrmD family. In terms of assembly, homodimer.

The protein resides in the cytoplasm. It catalyses the reaction guanosine(37) in tRNA + S-adenosyl-L-methionine = N(1)-methylguanosine(37) in tRNA + S-adenosyl-L-homocysteine + H(+). Specifically methylates guanosine-37 in various tRNAs. This Clostridium botulinum (strain Langeland / NCTC 10281 / Type F) protein is tRNA (guanine-N(1)-)-methyltransferase.